We begin with the raw amino-acid sequence, 1141 residues long: DNA-directed RNA polymerase subunit beta (1141 aa).

The protein belongs to the RNA polymerase beta chain family. The RNAP catalytic core consists of 2 alpha, 1 beta, 1 beta' and 1 omega subunit. When a sigma factor is associated with the core the holoenzyme is formed, which can initiate transcription.

It catalyses the reaction RNA(n) + a ribonucleoside 5'-triphosphate = RNA(n+1) + diphosphate. In terms of biological role, DNA-dependent RNA polymerase catalyzes the transcription of DNA into RNA using the four ribonucleoside triphosphates as substrates. In Parafrankia sp. (strain EAN1pec), this protein is DNA-directed RNA polymerase subunit beta.